The sequence spans 166 residues: Probable RNA-binding protein EIF1AD (166 aa).

One can recognise an S1-like domain in the interval 5–89 (TKRKHVVKEV…VKAEISFVLC (85 aa)). Positions 6–12 (KRKHVVK) match the Nuclear localization signal motif. Position 33 is a phosphothreonine (T33). The Nuclear localization signal motif lies at 56 to 65 (KYRKNIWIKR). The tract at residues 114–166 (NNNRNRQTQPELPAEPQLSGEESSSEDDSDLFVNTNRRQYRESEEESEEEEAA) is disordered. Residues S132, S136, S137, S138, S156, and S160 each carry the phosphoserine modification. Acidic residues predominate over residues 156-166 (SEEESEEEEAA).

This sequence belongs to the EIF1AD family. Interacts with GAPDH and STAT1.

It is found in the nucleus. Its function is as follows. Plays a role into cellular response to oxidative stress. Decreases cell proliferation. In Pongo abelii (Sumatran orangutan), this protein is Probable RNA-binding protein EIF1AD (EIF1AD).